A 214-amino-acid polypeptide reads, in one-letter code: Cytochrome b (214 aa).

Transmembrane regions (helical) follow at residues 31-51 (FGSM…FLAI), 75-96 (WIMQ…YTHI), 111-131 (WLSG…GYVL), and 176-196 (FFAL…IHII). 2 residues coordinate heme b: His-81 and His-95. The heme b site is built by His-180 and His-194. His-199 is a binding site for a ubiquinone.

It belongs to the cytochrome b family. As to quaternary structure, the cytochrome bc1 complex contains 3 respiratory subunits (MT-CYB, CYC1 and UQCRFS1), 2 core proteins (UQCRC1 and UQCRC2) and probably 6 low-molecular weight proteins. Heme b is required as a cofactor.

The protein localises to the mitochondrion inner membrane. Component of the ubiquinol-cytochrome c reductase complex (complex III or cytochrome b-c1 complex) that is part of the mitochondrial respiratory chain. The b-c1 complex mediates electron transfer from ubiquinol to cytochrome c. Contributes to the generation of a proton gradient across the mitochondrial membrane that is then used for ATP synthesis. In Cerastes cerastes (Horned desert viper), this protein is Cytochrome b (MT-CYB).